The following is a 368-amino-acid chain: MRVDLFDFELPEAAIALRPASPRDASRLLVVRPGDPLADRGVRDLPALLSPGDALVFNDTRVIPARLSGIRHRAGGSGQRCEAMLHLREAPDRWRAFARPAKRLAPGDRIRFGSEGASEVCALSGLDATVEERGEGGEILLRFDLSGPALDEAIAGLGALPLPPYIAGKRPTDAQDTTDYQTVYAREPGAVAAPTAGLHFSDALLAGIDAAGIERVHVTLHVGAGTFLPVKADDTDAHRMHAEIGILDAATAARLNAVRARGNRVVAVGTTALRLLESAADPDGTIRPFSGATDIFITPGYRFRAVDALVTNFHLPRSTLFMLVSAFAGLDTMRAAYAHAIQSGYRFYSYGDASLLFPEGAPVSESIT.

It belongs to the QueA family. As to quaternary structure, monomer.

The protein resides in the cytoplasm. The enzyme catalyses 7-aminomethyl-7-carbaguanosine(34) in tRNA + S-adenosyl-L-methionine = epoxyqueuosine(34) in tRNA + adenine + L-methionine + 2 H(+). It functions in the pathway tRNA modification; tRNA-queuosine biosynthesis. In terms of biological role, transfers and isomerizes the ribose moiety from AdoMet to the 7-aminomethyl group of 7-deazaguanine (preQ1-tRNA) to give epoxyqueuosine (oQ-tRNA). The chain is S-adenosylmethionine:tRNA ribosyltransferase-isomerase from Methylorubrum extorquens (strain CM4 / NCIMB 13688) (Methylobacterium extorquens).